The sequence spans 356 residues: Tetraacyldisaccharide 4'-kinase (356 aa).

67–74 (FVGGTGKT) provides a ligand contact to ATP.

This sequence belongs to the LpxK family.

The enzyme catalyses a lipid A disaccharide + ATP = a lipid IVA + ADP + H(+). Its pathway is glycolipid biosynthesis; lipid IV(A) biosynthesis; lipid IV(A) from (3R)-3-hydroxytetradecanoyl-[acyl-carrier-protein] and UDP-N-acetyl-alpha-D-glucosamine: step 6/6. In terms of biological role, transfers the gamma-phosphate of ATP to the 4'-position of a tetraacyldisaccharide 1-phosphate intermediate (termed DS-1-P) to form tetraacyldisaccharide 1,4'-bis-phosphate (lipid IVA). This chain is Tetraacyldisaccharide 4'-kinase, found in Herminiimonas arsenicoxydans.